A 523-amino-acid polypeptide reads, in one-letter code: Sensory neuron membrane protein 1 (523 aa).

The Cytoplasmic segment spans residues 1–10; sequence MRLARGIKYA. Residues 11–31 form a helical membrane-spanning segment; it reads VIGAGVALFGVLFGWVMFPAI. The Extracellular portion of the chain corresponds to 32-458; sequence LKSQLKKEMA…NQLFIPKRIV (427 aa). N-linked (GlcNAc...) asparagine glycosylation is found at Asn67 and Asn229. Disulfide bonds link Cys268–Cys333, Cys297–Cys352, and Cys335–Cys341. Asn440 carries N-linked (GlcNAc...) asparagine glycosylation. The helical transmembrane segment at 459-479 threads the bilayer; sequence SVIRWWLLSFGMLAALGGVIF. The Cytoplasmic segment spans residues 480-523; the sequence is HFKDDIMRIAIKGDSSVTKVNPEDGEQKDVSVIGQSHEPPKINM. The disordered stretch occupies residues 499 to 523; that stretch reads VNPEDGEQKDVSVIGQSHEPPKINM.

Belongs to the CD36 family. In terms of tissue distribution, localizes to both male and female antennae but not the leg, wing, gut, head, or thoracic ganglia. Detected throughout the sensory epithelium, associating with both sex-pheromone sensilla and plant-volatile sensilla. Differentially expressed both among different sensilla and different neurons within a given sensillum. Expression coincides with that of several other olfactory-specific proteins that are involved in odor detection.

It is found in the cell membrane. Functionally, plays an olfactory role that is not restricted to pheromone sensitivity. The polypeptide is Sensory neuron membrane protein 1 (Manduca sexta (Tobacco hawkmoth)).